Consider the following 360-residue polypeptide: Lipid-A-disaccharide synthase (360 aa).

Belongs to the LpxB family.

The enzyme catalyses a lipid X + a UDP-2-N,3-O-bis[(3R)-3-hydroxyacyl]-alpha-D-glucosamine = a lipid A disaccharide + UDP + H(+). It participates in bacterial outer membrane biogenesis; LPS lipid A biosynthesis. Condensation of UDP-2,3-diacylglucosamine and 2,3-diacylglucosamine-1-phosphate to form lipid A disaccharide, a precursor of lipid A, a phosphorylated glycolipid that anchors the lipopolysaccharide to the outer membrane of the cell. The protein is Lipid-A-disaccharide synthase of Helicobacter pylori (strain G27).